Consider the following 508-residue polypeptide: Photosystem II CP47 reaction center protein (508 aa).

A run of 6 helical transmembrane segments spans residues 21 to 36, 101 to 115, 140 to 156, 203 to 218, 237 to 252, and 457 to 472; these read SVHI…WAGS, IVFS…IWHW, GIHL…FGAF, IAAG…FHLS, VLSS…AFVV, and SFAL…HGSR.

Belongs to the PsbB/PsbC family. PsbB subfamily. In terms of assembly, PSII is composed of 1 copy each of membrane proteins PsbA, PsbB, PsbC, PsbD, PsbE, PsbF, PsbH, PsbI, PsbJ, PsbK, PsbL, PsbM, PsbT, PsbX, PsbY, PsbZ, Psb30/Ycf12, at least 3 peripheral proteins of the oxygen-evolving complex and a large number of cofactors. It forms dimeric complexes. Binds multiple chlorophylls. PSII binds additional chlorophylls, carotenoids and specific lipids. is required as a cofactor.

The protein localises to the plastid. The protein resides in the chloroplast thylakoid membrane. In terms of biological role, one of the components of the core complex of photosystem II (PSII). It binds chlorophyll and helps catalyze the primary light-induced photochemical processes of PSII. PSII is a light-driven water:plastoquinone oxidoreductase, using light energy to abstract electrons from H(2)O, generating O(2) and a proton gradient subsequently used for ATP formation. The sequence is that of Photosystem II CP47 reaction center protein from Capsella bursa-pastoris (Shepherd's purse).